Consider the following 32-residue polypeptide: Hyaluronidase-Pk1a (32 aa).

The N-linked (GlcNAc...) asparagine glycan is linked to Asn-23.

This sequence belongs to the glycosyl hydrolase 56 family. Expressed by the venom gland.

The protein localises to the secreted. It carries out the reaction Random hydrolysis of (1-&gt;4)-linkages between N-acetyl-beta-D-glucosamine and D-glucuronate residues in hyaluronate.. Functionally, hydrolyzes high molecular weight hyaluronic acid to produce small oligosaccharides. The chain is Hyaluronidase-Pk1a from Phoneutria keyserlingi (Brazilian wandering spider).